The sequence spans 251 residues: Imidazole glycerol phosphate synthase subunit HisF (251 aa).

Residues D11 and D130 contribute to the active site.

It belongs to the HisA/HisF family. In terms of assembly, heterodimer of HisH and HisF.

It localises to the cytoplasm. The catalysed reaction is 5-[(5-phospho-1-deoxy-D-ribulos-1-ylimino)methylamino]-1-(5-phospho-beta-D-ribosyl)imidazole-4-carboxamide + L-glutamine = D-erythro-1-(imidazol-4-yl)glycerol 3-phosphate + 5-amino-1-(5-phospho-beta-D-ribosyl)imidazole-4-carboxamide + L-glutamate + H(+). It functions in the pathway amino-acid biosynthesis; L-histidine biosynthesis; L-histidine from 5-phospho-alpha-D-ribose 1-diphosphate: step 5/9. IGPS catalyzes the conversion of PRFAR and glutamine to IGP, AICAR and glutamate. The HisF subunit catalyzes the cyclization activity that produces IGP and AICAR from PRFAR using the ammonia provided by the HisH subunit. The sequence is that of Imidazole glycerol phosphate synthase subunit HisF from Phocaeicola vulgatus (strain ATCC 8482 / DSM 1447 / JCM 5826 / CCUG 4940 / NBRC 14291 / NCTC 11154) (Bacteroides vulgatus).